The following is a 179-amino-acid chain: Bifunctional protein PyrR (179 aa).

A PRPP-binding motif is present at residues 100-112 (VILVDDVLFTGRT).

It belongs to the purine/pyrimidine phosphoribosyltransferase family. PyrR subfamily.

The enzyme catalyses UMP + diphosphate = 5-phospho-alpha-D-ribose 1-diphosphate + uracil. Functionally, regulates the transcription of the pyrimidine nucleotide (pyr) operon in response to exogenous pyrimidines. In terms of biological role, also displays a weak uracil phosphoribosyltransferase activity which is not physiologically significant. This Actinobacillus succinogenes (strain ATCC 55618 / DSM 22257 / CCUG 43843 / 130Z) protein is Bifunctional protein PyrR.